Here is a 438-residue protein sequence, read N- to C-terminus: Methylenetetrahydrofolate--tRNA-(uracil-5-)-methyltransferase TrmFO 2 (438 aa).

9 to 14 (GAGLAG) is a binding site for FAD.

Belongs to the MnmG family. TrmFO subfamily. It depends on FAD as a cofactor.

Its subcellular location is the cytoplasm. It carries out the reaction uridine(54) in tRNA + (6R)-5,10-methylene-5,6,7,8-tetrahydrofolate + NADH + H(+) = 5-methyluridine(54) in tRNA + (6S)-5,6,7,8-tetrahydrofolate + NAD(+). The enzyme catalyses uridine(54) in tRNA + (6R)-5,10-methylene-5,6,7,8-tetrahydrofolate + NADPH + H(+) = 5-methyluridine(54) in tRNA + (6S)-5,6,7,8-tetrahydrofolate + NADP(+). Catalyzes the folate-dependent formation of 5-methyl-uridine at position 54 (M-5-U54) in all tRNAs. The chain is Methylenetetrahydrofolate--tRNA-(uracil-5-)-methyltransferase TrmFO 2 from Mycoplasma mycoides subsp. mycoides SC (strain CCUG 32753 / NCTC 10114 / PG1).